Reading from the N-terminus, the 1241-residue chain is Nephrin (1241 aa).

A signal peptide spans 1 to 22; the sequence is MALGTTLRASLLLLGLLTEGLA. Over 23 to 1055 the chain is Extracellular; sequence QLAIPASVPR…EDQLPTEPPS (1033 aa). 6 consecutive Ig-like C2-type domains span residues 27–130, 143–234, 242–333, 340–434, 440–540, and 544–635; these read PASV…VILS, EAGT…SFTV, PPVI…HGIT, PSAI…KSLI, PAQK…TQLA, and PPTN…ETVS. An N-linked (GlcNAc...) asparagine glycan is attached at asparagine 40. 3 cysteine pairs are disulfide-bonded: cysteine 53–cysteine 111, cysteine 160–cysteine 217, and cysteine 265–cysteine 317. Residues asparagine 356 and asparagine 401 are each glycosylated (N-linked (GlcNAc...) asparagine). Cysteine 361 and cysteine 417 form a disulfide bridge. Serine 432 carries the post-translational modification Phosphoserine. Cysteine 465 and cysteine 528 are joined by a disulfide. N-linked (GlcNAc...) asparagine glycosylation is found at asparagine 547, asparagine 553, asparagine 564, asparagine 577, asparagine 680, and asparagine 708. Residues cysteine 567 and cysteine 623 are joined by a disulfide bond. Ig-like C2-type domains are found at residues 740 to 832 and 838 to 939; these read PTIR…LLRL and PQVE…VSIS. 2 disulfides stabilise this stretch: cysteine 761/cysteine 816 and cysteine 863/cysteine 920. A glycan (N-linked (GlcNAc...) asparagine) is linked at asparagine 908. Positions 943–1038 constitute a Fibronectin type-III domain; it reads PPSGLKVVSL…TQLPITTPGL (96 aa). Positions 1025–1057 are disordered; it reads ADKGTQLPITTPGLHQPSGEPEDQLPTEPPSGP. A helical membrane pass occupies residues 1056–1076; that stretch reads GPSGLPLLPVLFALGGLLLLS. Residues 1077–1241 are Cytoplasmic-facing; that stretch reads NASCVGGVLW…LPFELRGHLV (165 aa). Serine 1098 carries the post-translational modification Phosphoserine. Residues 1099–1114 are compositionally biased toward basic and acidic residues; the sequence is EKTEAGSEEDRVRNEY. The segment at 1099–1137 is disordered; the sequence is EKTEAGSEEDRVRNEYEESQWTGERDTQSSTVSTTEAEP. Threonine 1101 is subject to Phosphothreonine. Serine 1105 carries the post-translational modification Phosphoserine. Residues 1160-1241 are binds to NPHS2; it reads RGFTGEDEDM…LPFELRGHLV (82 aa). The residue at position 1193 (tyrosine 1193) is a Phosphotyrosine; by FYN.

The protein belongs to the immunoglobulin superfamily. In terms of assembly, interacts with CD2AP (via C-terminal domain). Interacts with MAGI1 (via PDZ 2 and 3 domains) forming a tripartite complex with IGSF5/JAM4. Interacts with DDN; the interaction is direct. Self-associates (via the Ig-like domains). Also interacts (via the Ig-like domains) with KIRREL1/NEPH1 and KIRREL2; the interaction with KIRREL1 is dependent on KIRREL1 glycosylation. Interacts with KIRREL3. Forms a complex with ACTN4, CASK, IQGAP1, MAGI2, SPTAN1 and SPTBN1. Interacts with NPHS2. Interacts with phosphatidylinositol 3-kinase regulatory subunit PIK3R1; the interaction is reduced by high glucose levels. Phosphorylated at Tyr-1193 by FYN, leading to the recruitment and activation of phospholipase C-gamma-1/PLCG1. Tyrosine phosphorylation is reduced by high glucose levels. Dephosphorylated by tensin TNS2 which leads to reduced binding of NPHN1 to PIK3R1. In terms of tissue distribution, specifically expressed in podocytes of kidney glomeruli.

The protein resides in the cell membrane. In terms of biological role, seems to play a role in the development or function of the kidney glomerular filtration barrier. Regulates glomerular vascular permeability. May anchor the podocyte slit diaphragm to the actin cytoskeleton. Plays a role in skeletal muscle formation through regulation of myoblast fusion. This chain is Nephrin (NPHS1), found in Homo sapiens (Human).